Here is a 225-residue protein sequence, read N- to C-terminus: Superoxide dismutase [Mn], mitochondrial (225 aa).

The N-terminal 27 residues, 1-27 (MITAITRTALPRATLRTSLATMSTIRA), are a transit peptide targeting the mitochondrion. Residues His-53, His-101, Asp-187, and His-191 each coordinate Mn(2+).

It belongs to the iron/manganese superoxide dismutase family. Requires Mn(2+) as cofactor.

The protein localises to the mitochondrion. It localises to the cytoplasm. The enzyme catalyses 2 superoxide + 2 H(+) = H2O2 + O2. Functionally, destroys radicals which are normally produced within the cells and which are toxic to biological systems. Its function is as follows. Destroys mitochondrial radicals produced by oxidative stress. In terms of biological role, destroys cytoplasmic radicals produced in low copper environments; a condition which inactivates the cytoplasmic copper-dependent superoxide dismutase SOD1. This chain is Superoxide dismutase [Mn], mitochondrial, found in Cryptococcus neoformans var. grubii serotype A (strain H99 / ATCC 208821 / CBS 10515 / FGSC 9487) (Filobasidiella neoformans var. grubii).